Here is a 939-residue protein sequence, read N- to C-terminus: Dynamin-like GTPase MGM1, mitochondrial (939 aa).

Residues 1 to 27 (MSAQLRAAAAITPAARRVISGPAAVRR) constitute a mitochondrion transit peptide. A helical transmembrane segment spans residues 85–103 (FIRVPALFGGMMLGAVGWV). Residues 170-183 (AGEGSGSGEGGPNG) are compositionally biased toward gly residues. The disordered stretch occupies residues 170 to 196 (AGEGSGSGEGGPNGGPEPPRQSRAGAA). Residues 249 to 522 (TVTLPSIVVI…LEQQMSSKLN (274 aa)) form the Dynamin-type G domain. A G1 motif region spans residues 259 to 266 (GSQSSGKS). The GTP site is built by Ser-262, Gly-264, Lys-265, Ser-266, Ser-267, and Gly-281. Ser-266 contributes to the Mg(2+) binding site. Residues 285 to 287 (ITR) form a G2 motif region. Thr-286 and Asp-359 together coordinate Mg(2+). A G3 motif region spans residues 359–362 (DLPG). Residues 427 to 430 (TKMD) are G4 motif. 3 residues coordinate GTP: Lys-428, Asp-430, and Ser-457. The segment at 456–459 (ISKL) is G5 motif. Positions 549–703 (SAESYLAASL…TSDGIEISLK (155 aa)) are stalk region. The tract at residues 710–809 (DIQPNEWAQG…LSLRIQAAKS (100 aa)) is paddle region. Residues 810–877 (RQCKTLTNKY…GGGLEKFARE (68 aa)) form a stalk region region. A disulfide bridge links Cys-812 with Cys-821. The region spanning 815–909 (LTNKYYCPEV…KIEELHRISS (95 aa)) is the GED domain.

It belongs to the TRAFAC class dynamin-like GTPase superfamily. Dynamin/Fzo/YdjA family. As to quaternary structure, oligomeric complex consisting of membrane-bound and soluble forms of MGM1. Post-translationally, cleavage of the transit peptide by mitochondrial processing protease (MPP) produces a long integral membrane form of MGM1 (L-MGM1). Further processing by the rhomboid protease PCP1 produces a short peripheral membrane form of MGM1 (S-MGM1). Both forms are required for full activity.

Its subcellular location is the mitochondrion inner membrane. It localises to the mitochondrion intermembrane space. It catalyses the reaction GTP + H2O = GDP + phosphate + H(+). Dynamin-related GTPase that is essential for normal mitochondrial morphology by mediating fusion of the mitochondrial inner membranes, regulating cristae morphology and maintaining respiratory chain function. Exists in two forms: the transmembrane, long form (Dynamin-like GTPase MGM1, long form; L-MGM1), which is tethered to the inner mitochondrial membrane, and the short soluble form (Dynamin-like GTPase MGM1, short form; S-MGM1), which results from proteolytic cleavage and localizes in the intermembrane space. Both forms (L-MGM1 and S-MGM1) cooperate to catalyze the fusion of the mitochondrial inner membrane. The equilibrium between L-MGM1 and S-MGM1 is essential: excess levels of S-MGM1, following loss of mitochondrial membrane potential, lead to an impaired equilibrium between L-MGM1 and S-MGM1, inhibiting mitochondrial fusion. Plays a role in the maintenance and remodeling of mitochondrial cristae, some invaginations of the mitochondrial inner membrane that provide an increase in the surface area. Probably acts by forming helical filaments at the inside of inner membrane tubes with the shape and dimensions of crista junctions. Its function is as follows. Constitutes the transmembrane long form (L-MGM1) that plays a central role in mitochondrial inner membrane fusion and cristae morphology. L-MGM1 and the soluble short form (S-MGM1) form higher-order helical assemblies that coordinate the fusion of mitochondrial inner membranes. Inner membrane-anchored L-MGM1 molecules initiate membrane remodeling by recruiting soluble S-MGM1 to rapidly polymerize into a flexible cylindrical scaffold encaging the mitochondrial inner membrane. Once at the membrane surface, the formation of S-MGM1 helices induce bilayer curvature. MGM1 dimerization through the paddle region, which inserts into cardiolipin-containing membrane, promotes GTP hydrolysis and the helical assembly of a flexible MGM1 lattice on the membrane, which drives membrane curvature and mitochondrial fusion. Functionally, constitutes the soluble short form (S-MGM1) generated by cleavage by PCP1, which plays a central role in mitochondrial inner membrane fusion and cristae morphology. The transmembrane long form (L-MGM1) and the S-MGM1 form higher-order helical assemblies that coordinate the fusion of mitochondrial inner membranes. Inner membrane-anchored L-MGM1 molecules initiate membrane remodeling by recruiting soluble S-MGM1 to rapidly polymerize into a flexible cylindrical scaffold encaging the mitochondrial inner membrane. Once at the membrane surface, the formation of S-MGM1 helices induce bilayer curvature. MGM1 dimerization through the paddle region, which inserts into cardiolipin-containing membrane, promotes GTP hydrolysis and the helical assembly of a flexible MGM1 lattice on the membrane, which drives membrane curvature and mitochondrial fusion. Excess levels of S-MGM1 produced by cleavage by PCP1 following stress conditions that induce loss of mitochondrial membrane potential, lead to an impaired equilibrium between L-MGM1 and S-MGM1, thereby inhibiting mitochondrial fusion. The polypeptide is Dynamin-like GTPase MGM1, mitochondrial (Chaetomium thermophilum (strain DSM 1495 / CBS 144.50 / IMI 039719) (Thermochaetoides thermophila)).